Reading from the N-terminus, the 296-residue chain is tRNA dimethylallyltransferase (296 aa).

2 to 9 (GPTASGKT) is a binding site for ATP. Residue 4 to 9 (TASGKT) coordinates substrate. Interaction with substrate tRNA stretches follow at residues 27–30 (DSAL), 151–155 (QRLSR), and 232–237 (RCVGYR).

It belongs to the IPP transferase family. In terms of assembly, monomer. The cofactor is Mg(2+).

The catalysed reaction is adenosine(37) in tRNA + dimethylallyl diphosphate = N(6)-dimethylallyladenosine(37) in tRNA + diphosphate. Its function is as follows. Catalyzes the transfer of a dimethylallyl group onto the adenine at position 37 in tRNAs that read codons beginning with uridine, leading to the formation of N6-(dimethylallyl)adenosine (i(6)A). The polypeptide is tRNA dimethylallyltransferase (Shewanella sp. (strain MR-7)).